Consider the following 981-residue polypeptide: Peroxisomal ATPase PEX6 (981 aa).

R119 is subject to Omega-N-methylarginine. Residues 471-478 (GPPGSGKT) and 745-752 (GPPGTGKT) contribute to the ATP site.

Belongs to the AAA ATPase family. Interacts with PEX1; forming the PEX1-PEX6 AAA ATPase complex, which is composed of a heterohexamer formed by a trimer of PEX1-PEX6 dimers. Interacts with PEX26; interaction is direct and promotes recruitment to peroxisomal membranes. Interacts with ZFAND6. As to expression, in the teeth, expressed in ameloblasts and odontoblasts. Expressed in the retina, at higher levels in the ganglion cell layer and photoreceptor layer at the joint between the outer and inner segments.

The protein resides in the cytoplasm. Its subcellular location is the cytosol. It is found in the peroxisome membrane. The protein localises to the cell projection. It localises to the cilium. The protein resides in the photoreceptor outer segment. The catalysed reaction is ATP + H2O = ADP + phosphate + H(+). Its function is as follows. Component of the PEX1-PEX6 AAA ATPase complex, a protein dislocase complex that mediates the ATP-dependent extraction of the PEX5 receptor from peroxisomal membranes, an essential step for PEX5 recycling. Specifically recognizes PEX5 monoubiquitinated at 'Cys-11', and pulls it out of the peroxisome lumen through the PEX2-PEX10-PEX12 retrotranslocation channel. Extraction by the PEX1-PEX6 AAA ATPase complex is accompanied by unfolding of the TPR repeats and release of bound cargo from PEX5. This Mus musculus (Mouse) protein is Peroxisomal ATPase PEX6.